We begin with the raw amino-acid sequence, 395 residues long: HORMA domain-containing protein 1 (395 aa).

Residues 24-226 (QQSLVLVKRL…TPFHTFKVKV (203 aa)) form the HORMA domain. A disordered region spans residues 329-395 (DVSESKTRSG…RKFSEPKEYV (67 aa)). Residues 344–353 (KMANGNQPVK) are compositionally biased toward polar residues. The span at 354–363 (SSKENRKRNQ) shows a compositional bias: basic and acidic residues. Position 377 is a phosphoserine (S377). Residues 384 to 387 (KRRK) carry the Nuclear localization signal motif.

As to quaternary structure, interacts with HORMAD2. Interacts with IHO1. Post-translationally, phosphorylated at Ser-378 in a SPO11-dependent manner.

It localises to the nucleus. Its subcellular location is the chromosome. Its function is as follows. Plays a key role in meiotic progression. Regulates 3 different functions during meiosis: ensures that sufficient numbers of processed DNA double-strand breaks (DSBs) are available for successful homology search by increasing the steady-state numbers of single-stranded DSB ends. Promotes synaptonemal-complex formation independently of its role in homology search. Plays a key role in the male mid-pachytene checkpoint and the female meiotic prophase checkpoint: required for efficient build-up of ATR activity on unsynapsed chromosome regions, a process believed to form the basis of meiotic silencing of unsynapsed chromatin (MSUC) and meiotic prophase quality control in both sexes. The sequence is that of HORMA domain-containing protein 1 (HORMAD1) from Canis lupus familiaris (Dog).